The following is a 328-amino-acid chain: Probable nicotianamine synthase 6 (328 aa).

This sequence belongs to the nicotianamine synthase (NAS)-like family.

It catalyses the reaction 3 S-adenosyl-L-methionine = nicotianamine + 3 S-methyl-5'-thioadenosine + 3 H(+). In terms of biological role, synthesizes nicotianamine, a polyamine that is the first intermediate in the synthesis of the phytosiderophores of the mugineic acid type found in gramineae which serves as a sensor for the physiological iron status within the plant, and/or might be involved in the transport of iron. This is Probable nicotianamine synthase 6 (NAS6) from Hordeum vulgare (Barley).